Reading from the N-terminus, the 247-residue chain is 5'-nucleotidase SurE (247 aa).

Positions 8, 9, 39, and 91 each coordinate a divalent metal cation.

The protein belongs to the SurE nucleotidase family. A divalent metal cation is required as a cofactor.

The protein localises to the cytoplasm. The catalysed reaction is a ribonucleoside 5'-phosphate + H2O = a ribonucleoside + phosphate. Nucleotidase that shows phosphatase activity on nucleoside 5'-monophosphates. This chain is 5'-nucleotidase SurE, found in Methylobacillus flagellatus (strain ATCC 51484 / DSM 6875 / VKM B-1610 / KT).